A 270-amino-acid chain; its full sequence is Indole-3-glycerol phosphate synthase (270 aa).

Belongs to the TrpC family.

The enzyme catalyses 1-(2-carboxyphenylamino)-1-deoxy-D-ribulose 5-phosphate + H(+) = (1S,2R)-1-C-(indol-3-yl)glycerol 3-phosphate + CO2 + H2O. The protein operates within amino-acid biosynthesis; L-tryptophan biosynthesis; L-tryptophan from chorismate: step 4/5. This is Indole-3-glycerol phosphate synthase from Salinibacter ruber (strain DSM 13855 / M31).